Here is a 314-residue protein sequence, read N- to C-terminus: Fibrinogen-like protein 1 (314 aa).

Residues 1 to 22 (MGKIYSFVLVAIALMMGREGWA) form the signal peptide. Residues 28 to 62 (CLREQVRLRAQVHQLETRVKQQQTMIAQLLHEKEV) adopt a coiled-coil conformation. Positions 76 to 308 (LGGKRQYADC…SVVMKIRPSD (233 aa)) constitute a Fibrinogen C-terminal domain. Intrachain disulfides connect cysteine 85–cysteine 114 and cysteine 250–cysteine 263.

Homodimer. Interacts (via the Fibrinogen C-terminal domain) with LAG3 (via Ig-like domains 1 and 2). In terms of tissue distribution, mainly expressed in liver. Also expressed in brown adipose tissue.

The protein localises to the secreted. Its function is as follows. Immune suppressive molecule that inhibits antigen-specific T-cell activation by acting as a major ligand of LAG3. Responsible for LAG3 T-cell inhibitory function. Binds LAG3 independently from MHC class II (MHC-II). Secreted by, and promotes growth of, hepatocytes. This is Fibrinogen-like protein 1 (Fgl1) from Mus musculus (Mouse).